The sequence spans 366 residues: Beta sliding clamp (366 aa).

It belongs to the beta sliding clamp family. Forms a ring-shaped head-to-tail homodimer around DNA which binds and tethers DNA polymerases and other proteins to the DNA. The DNA replisome complex has a single clamp-loading complex (3 tau and 1 each of delta, delta', psi and chi subunits) which binds 3 Pol III cores (1 core on the leading strand and 2 on the lagging strand) each with a beta sliding clamp dimer. Additional proteins in the replisome are other copies of gamma, psi and chi, Ssb, DNA helicase and RNA primase.

It localises to the cytoplasm. Confers DNA tethering and processivity to DNA polymerases and other proteins. Acts as a clamp, forming a ring around DNA (a reaction catalyzed by the clamp-loading complex) which diffuses in an ATP-independent manner freely and bidirectionally along dsDNA. Initially characterized for its ability to contact the catalytic subunit of DNA polymerase III (Pol III), a complex, multichain enzyme responsible for most of the replicative synthesis in bacteria; Pol III exhibits 3'-5' exonuclease proofreading activity. The beta chain is required for initiation of replication as well as for processivity of DNA replication. This Buchnera aphidicola subsp. Rhopalosiphum padi protein is Beta sliding clamp (dnaN).